The primary structure comprises 527 residues: Cytochrome P450 monooxygenase olcJ (527 aa).

The helical transmembrane segment at 21 to 43 (GLLTRYNVFMAISITVTALYLIH) threads the bilayer. Position 464 (cysteine 464) interacts with heme.

This sequence belongs to the cytochrome P450 family. The cofactor is heme.

The protein resides in the membrane. Its pathway is secondary metabolite biosynthesis; terpenoid biosynthesis. In terms of biological role, cytochrome P450 monooxygenase; part of the gene cluster that mediates the biosynthesis of 15-deoxyoxalicine B. The first step of the pathway is the synthesis of nicotinyl-CoA from nicotinic acid by the nicotinic acid-CoA ligase olcI. Nicotinyl-CoA is then a substrate of polyketide synthase olcA to produce 4-hydroxy-6-(3-pyridinyl)-2H-pyran-2-one (HPPO) which is further prenylated by the polyprenyl transferase olcH to yield geranylgeranyl-HPPO. Geranylgeranyl pyrophosphate is provided by the cluster-specific geranylgeranyl pyrophosphate synthase olcC. The FAD-dependent monooxygenase olcE catalyzes the epoxidation of geranylgeranyl-HPPO and the terpene cyclase olcD catalyzes the cyclization of the terpenoid component, resulting in the formation of the tricyclic terpene moiety seen in predecaturin E. The cytochrome P450 monooxygenase then catalyzes the allylic oxidation of predecaturin E, which is followed by spirocylization with concomitant loss of one molecule of water to form decaturin E. Decaturin E is the substrate of the cytochrome P450 monooxygenase olcJ which hydroxylates it at the C-29 position to form decaturin F. The short-chain dehydrogenase/reductase olcF may catalyze the oxidation of decaturin F to generate the 29-hydroxyl-27-one intermediate, and subsequent hemiacetal formation probably leads to the formation of decaturin C. The dioxygenase olcK may be a peroxisomal enzyme that catalyzes the hydroxylation of decaturin C into decaturin A once decaturin C is shuttled into the peroxisome by the MFS transporter olcL. Finally the cytochrome P450 monooxygenase olcB catalyzes the oxidative rearrangement to yield 15-deoxyoxalicine B. In the absence of olcJ, decaturin E may be shunted to a pathway in which it is oxidized to a ketone, possibly by olcF, to form decaturin D, which undergoes further allylic oxidation to yield decaturin G. Moreover, in the absence of oclK or oclL, oclB can convert decaturin C into 15-deoxyoxalicine A. This Penicillium canescens protein is Cytochrome P450 monooxygenase olcJ.